A 149-amino-acid polypeptide reads, in one-letter code: FKBP-type 16 kDa peptidyl-prolyl cis-trans isomerase (149 aa).

Positions 2–72 (SESVQSNSAV…FSLEPDAAFG (71 aa)) constitute a PPIase FKBP-type domain.

Belongs to the FKBP-type PPIase family.

The catalysed reaction is [protein]-peptidylproline (omega=180) = [protein]-peptidylproline (omega=0). Its function is as follows. PPIases accelerate the folding of proteins. Substrate specificity carried out with 'Suc-Ala-Xaa-Pro-Phe-4-nitroanilide', where Xaa is the amino acid tested, was found to be Phe &gt; Leu &gt;&gt; Ile &gt; Lys = Ala &gt; Trp &gt; His &gt;&gt; Gln. In Escherichia coli O6:H1 (strain CFT073 / ATCC 700928 / UPEC), this protein is FKBP-type 16 kDa peptidyl-prolyl cis-trans isomerase (fkpB).